Reading from the N-terminus, the 158-residue chain is NADH-quinone oxidoreductase subunit B (158 aa).

4 residues coordinate [4Fe-4S] cluster: cysteine 37, cysteine 38, cysteine 102, and cysteine 132.

It belongs to the complex I 20 kDa subunit family. NDH-1 is composed of 14 different subunits. Subunits NuoB, C, D, E, F, and G constitute the peripheral sector of the complex. It depends on [4Fe-4S] cluster as a cofactor.

It localises to the cell inner membrane. It carries out the reaction a quinone + NADH + 5 H(+)(in) = a quinol + NAD(+) + 4 H(+)(out). NDH-1 shuttles electrons from NADH, via FMN and iron-sulfur (Fe-S) centers, to quinones in the respiratory chain. Couples the redox reaction to proton translocation (for every two electrons transferred, four hydrogen ions are translocated across the cytoplasmic membrane), and thus conserves the redox energy in a proton gradient. The protein is NADH-quinone oxidoreductase subunit B of Nitrosomonas europaea (strain ATCC 19718 / CIP 103999 / KCTC 2705 / NBRC 14298).